The primary structure comprises 427 residues: Trigger factor (427 aa).

The region spanning 163–248 (GDTVVIDFVG…VHEVKSKEVP (86 aa)) is the PPIase FKBP-type domain.

The protein belongs to the FKBP-type PPIase family. Tig subfamily.

The protein resides in the cytoplasm. The enzyme catalyses [protein]-peptidylproline (omega=180) = [protein]-peptidylproline (omega=0). Functionally, involved in protein export. Acts as a chaperone by maintaining the newly synthesized protein in an open conformation. Functions as a peptidyl-prolyl cis-trans isomerase. The protein is Trigger factor of Streptococcus uberis (strain ATCC BAA-854 / 0140J).